The chain runs to 412 residues: Divalent metal cation transporter MntH (412 aa).

The Cytoplasmic portion of the chain corresponds to 1–19 (MTNYRVESSSGRAARKMRL). A helical transmembrane segment spans residues 20 to 39 (ALMGPAFIAAIGYIDPGNFA). Residues 40–51 (TNIQAGASFGYQ) are Periplasmic-facing. The chain crosses the membrane as a helical span at residues 52–71 (LLWVVVWANLMAMLIQILSA). The Cytoplasmic segment spans residues 72–95 (KLGIATGKNLAEQIRDHYPRPVVW). The helical transmembrane segment at 96–118 (FYWVQAEIIAMATDLAEFIGAAI) threads the bilayer. Over 119-125 (GFKLILG) the chain is Periplasmic. The helical transmembrane segment at 126 to 145 (VSLLQGAVLTGIATFLILML) threads the bilayer. Over 146-155 (QRRGQKPLEK) the chain is Cytoplasmic. Residues 156–175 (VIGGLLLFVAAAYIVELIFS) form a helical membrane-spanning segment. The Periplasmic segment spans residues 176–196 (QPNLAQLGKGMVIPSLPTSEA). A helical transmembrane segment spans residues 197-220 (VFLAAGVLGATIMPHVIYLHSSLT). Residues 221 to 238 (QHLHGGSRQQRYSATKWD) are Cytoplasmic-facing. The helical transmembrane segment at 239–258 (VAIAMTIAGFVNLVMMATAA) threads the bilayer. Topologically, residues 259–276 (AAFHFSGHTGVADLDEAY) are periplasmic. The chain crosses the membrane as a helical span at residues 277–297 (LTLQPLLSHAAATVFGLSLVA). Residues 298 to 327 (AGLSSTVVGTLAGQVVMQGFIRFHIPLWVR) lie on the Cytoplasmic side of the membrane. The chain crosses the membrane as a helical span at residues 328–344 (RTVTMLPSFIVILMGLD). The Periplasmic segment spans residues 345–350 (PTRILV). A helical transmembrane segment spans residues 351–370 (MSQVLLSFGIALALVPLLIF). Residues 371–387 (TSDSKLMGDLVNSKRVK) lie on the Cytoplasmic side of the membrane. A helical transmembrane segment spans residues 388-406 (QTGWVIVVLVVALNIWLLV). Residues 407-412 (GTALGL) lie on the Periplasmic side of the membrane.

The protein belongs to the NRAMP family.

The protein localises to the cell inner membrane. Functionally, h(+)-stimulated, divalent metal cation uptake system. This Shigella flexneri serotype 5b (strain 8401) protein is Divalent metal cation transporter MntH.